Consider the following 361-residue polypeptide: Phosphoribosylformylglycinamidine cyclo-ligase (361 aa).

Belongs to the AIR synthase family.

It is found in the cytoplasm. The enzyme catalyses 2-formamido-N(1)-(5-O-phospho-beta-D-ribosyl)acetamidine + ATP = 5-amino-1-(5-phospho-beta-D-ribosyl)imidazole + ADP + phosphate + H(+). It functions in the pathway purine metabolism; IMP biosynthesis via de novo pathway; 5-amino-1-(5-phospho-D-ribosyl)imidazole from N(2)-formyl-N(1)-(5-phospho-D-ribosyl)glycinamide: step 2/2. This chain is Phosphoribosylformylglycinamidine cyclo-ligase, found in Bartonella henselae (strain ATCC 49882 / DSM 28221 / CCUG 30454 / Houston 1) (Rochalimaea henselae).